The chain runs to 264 residues: Thymidylate synthase (264 aa).

R21 serves as a coordination point for dUMP. H51 serves as a coordination point for (6R)-5,10-methylene-5,6,7,8-tetrahydrofolate. Residue 126–127 (RR) participates in dUMP binding. C146 functions as the Nucleophile in the catalytic mechanism. Residues 166-169 (RSCD), N177, and 207-209 (HLY) each bind dUMP. D169 contributes to the (6R)-5,10-methylene-5,6,7,8-tetrahydrofolate binding site. A263 provides a ligand contact to (6R)-5,10-methylene-5,6,7,8-tetrahydrofolate.

Belongs to the thymidylate synthase family. Bacterial-type ThyA subfamily. Homodimer.

It localises to the cytoplasm. It catalyses the reaction dUMP + (6R)-5,10-methylene-5,6,7,8-tetrahydrofolate = 7,8-dihydrofolate + dTMP. Its pathway is pyrimidine metabolism; dTTP biosynthesis. Its function is as follows. Catalyzes the reductive methylation of 2'-deoxyuridine-5'-monophosphate (dUMP) to 2'-deoxythymidine-5'-monophosphate (dTMP) while utilizing 5,10-methylenetetrahydrofolate (mTHF) as the methyl donor and reductant in the reaction, yielding dihydrofolate (DHF) as a by-product. This enzymatic reaction provides an intracellular de novo source of dTMP, an essential precursor for DNA biosynthesis. This is Thymidylate synthase from Shigella boydii serotype 4 (strain Sb227).